Consider the following 89-residue polypeptide: Ribonuclease P protein component 1 (89 aa).

This sequence belongs to the eukaryotic/archaeal RNase P protein component 1 family. Consists of a catalytic RNA component and at least 4-5 protein subunits.

The protein localises to the cytoplasm. The catalysed reaction is Endonucleolytic cleavage of RNA, removing 5'-extranucleotides from tRNA precursor.. Functionally, part of ribonuclease P, a protein complex that generates mature tRNA molecules by cleaving their 5'-ends. This is Ribonuclease P protein component 1 from Thermoplasma volcanium (strain ATCC 51530 / DSM 4299 / JCM 9571 / NBRC 15438 / GSS1).